The sequence spans 270 residues: Putative pyruvate, phosphate dikinase regulatory protein (270 aa).

149–156 (GVSRTSKT) contributes to the ADP binding site.

It belongs to the pyruvate, phosphate/water dikinase regulatory protein family. PDRP subfamily.

The catalysed reaction is N(tele)-phospho-L-histidyl/L-threonyl-[pyruvate, phosphate dikinase] + ADP = N(tele)-phospho-L-histidyl/O-phospho-L-threonyl-[pyruvate, phosphate dikinase] + AMP + H(+). It carries out the reaction N(tele)-phospho-L-histidyl/O-phospho-L-threonyl-[pyruvate, phosphate dikinase] + phosphate + H(+) = N(tele)-phospho-L-histidyl/L-threonyl-[pyruvate, phosphate dikinase] + diphosphate. Functionally, bifunctional serine/threonine kinase and phosphorylase involved in the regulation of the pyruvate, phosphate dikinase (PPDK) by catalyzing its phosphorylation/dephosphorylation. The sequence is that of Putative pyruvate, phosphate dikinase regulatory protein from Thermoanaerobacter pseudethanolicus (strain ATCC 33223 / 39E) (Clostridium thermohydrosulfuricum).